A 583-amino-acid polypeptide reads, in one-letter code: Zinc finger protein 277 (583 aa).

C2H2-type zinc fingers lie at residues 351 to 375 (LQCL…KKQH) and 482 to 508 (HQCK…DTKH).

It belongs to the ZNF277 family. Interacts (via zinc-finger domains) with RPS2/40S ribosomal protein S2, perhaps as nascent RPS2 is synthesized during translation; the interaction is direct; the interaction is extra-ribosomal. Interaction with RPS2 competes with the binding of RPS2 to protein arginine methyltransferase PRMT3. Interacts with Polycomb group (PcG) complex protein BMI1. May be part of a complex including at least ZNF277, BMI1 and RNF2/RING2.

Its subcellular location is the nucleus. The protein localises to the cytoplasm. It localises to the nucleolus. The protein resides in the chromosome. Its function is as follows. Probable transcription factor. Involved in modulation of cellular senescence; represses transcription of the tumor suppressor gene INK4A/ARF, perhaps acting via the Polycomb group (PcG) complex PRC1. This chain is Zinc finger protein 277, found in Mus musculus (Mouse).